Reading from the N-terminus, the 532-residue chain is Transcriptional regulatory protein RtcR (532 aa).

The 239-residue stretch at 186–424 folds into the Sigma-54 factor interaction domain; that stretch reads IATRNPHFNR…LSASVTRMAT (239 aa). Residues 215–222 and 281–290 each bind ATP; these read GPTGAGKS and ANGGMLFLDE. The H-T-H motif DNA-binding region spans 485–504; sequence KSLSAAGRQLFDVSRQGKAS.

Transcriptional repressor of the rtcAB genes. Interacts with sigma-54. This chain is Transcriptional regulatory protein RtcR (rtcR), found in Escherichia coli (strain K12).